The primary structure comprises 300 residues: MDNTSKVHKLMELAELARLPRRKEVEGAVIVIKVGGHAMVDPAARSSIIKDIVTLRELGALPVIVHGGGPEIDAMVKRMGMTPSFVAGIRVTDDETLEIVRMVLVGNVSPDIVSLIMRHGGKGVGLLGSSGSLLIARKKPMEKVKVDGKEIMVDYGWVGDTEQVNTSILMDLLDKGYIPVISPIGYDRDGHCLNLNADTVAGDIASALKAGSLVSLTDVNGVMMDPSDKSTLLSHLTEKECEDLIERGIISRGMIPKIRSSLCVLKAGAHSVHIINGNIEHALLLELLTEKGVGTRLTLK.

Residues 68–69 (GG), R90, and N194 each bind substrate.

This sequence belongs to the acetylglutamate kinase family. ArgB subfamily.

It is found in the cytoplasm. It catalyses the reaction N-acetyl-L-glutamate + ATP = N-acetyl-L-glutamyl 5-phosphate + ADP. It functions in the pathway amino-acid biosynthesis; L-arginine biosynthesis; N(2)-acetyl-L-ornithine from L-glutamate: step 2/4. Functionally, catalyzes the ATP-dependent phosphorylation of N-acetyl-L-glutamate. The polypeptide is Acetylglutamate kinase (Methanocella arvoryzae (strain DSM 22066 / NBRC 105507 / MRE50)).